The following is a 304-amino-acid chain: UDP-3-O-acyl-N-acetylglucosamine deacetylase (304 aa).

Residues H78, H237, and D241 each contribute to the Zn(2+) site. The active-site Proton donor is H264.

It belongs to the LpxC family. It depends on Zn(2+) as a cofactor.

The enzyme catalyses a UDP-3-O-[(3R)-3-hydroxyacyl]-N-acetyl-alpha-D-glucosamine + H2O = a UDP-3-O-[(3R)-3-hydroxyacyl]-alpha-D-glucosamine + acetate. It participates in glycolipid biosynthesis; lipid IV(A) biosynthesis; lipid IV(A) from (3R)-3-hydroxytetradecanoyl-[acyl-carrier-protein] and UDP-N-acetyl-alpha-D-glucosamine: step 2/6. Catalyzes the hydrolysis of UDP-3-O-myristoyl-N-acetylglucosamine to form UDP-3-O-myristoylglucosamine and acetate, the committed step in lipid A biosynthesis. The protein is UDP-3-O-acyl-N-acetylglucosamine deacetylase of Marinobacter nauticus (strain ATCC 700491 / DSM 11845 / VT8) (Marinobacter aquaeolei).